The following is a 2139-amino-acid chain: U5 small nuclear ribonucleoprotein 200 kDa helicase (2139 aa).

Ser17 and Ser26 each carry phosphoserine. The segment at 39 to 80 (EVLSLVGKLEGTRMGDKAQRTKPQMQEERRAKRRKRDEDRHD) is disordered. Lys46 participates in a covalent cross-link: Glycyl lysine isopeptide (Lys-Gly) (interchain with G-Cter in SUMO2). A compositionally biased stretch (basic and acidic residues) spans 48-80 (EGTRMGDKAQRTKPQMQEERRAKRRKRDEDRHD). A coiled-coil region spans residues 54 to 84 (DKAQRTKPQMQEERRAKRRKRDEDRHDINKM). Position 225 is a phosphoserine (Ser225). A Phosphothreonine modification is found at Thr389. The tract at residues 395–2132 (DLDQGGEALA…YKFSVDVKEA (1738 aa)) is interaction with C9orf78 and WBP4. One can recognise a Helicase ATP-binding 1 domain in the interval 490–673 (RAALETDENL…FLRVDPAKGL (184 aa)). 503 to 510 (APTGAGKT) serves as a coordination point for ATP. The short motif at 615-618 (DEIH) is the DEAH box element. Residues 684-921 (PLEQTYVGIT…NAKDAVNWLG (238 aa)) form the Helicase C-terminal 1 domain. A Phosphotyrosine modification is found at Tyr709. Lys944 participates in a covalent cross-link: Glycyl lysine isopeptide (Lys-Gly) (interchain with G-Cter in SUMO). N6-acetyllysine; alternate is present on Lys971. Lys971 participates in a covalent cross-link: Glycyl lysine isopeptide (Lys-Gly) (interchain with G-Cter in SUMO); alternate. Positions 982–1289 (TELGRIASHY…SCETQLPVSF (308 aa)) constitute an SEC63 1 domain. Residues Lys1071 and Lys1199 each participate in a glycyl lysine isopeptide (Lys-Gly) (interchain with G-Cter in SUMO) cross-link. The interval 1285 to 2139 (LPVSFRHLIL…KEAETDSDSD (855 aa)) is interaction with TSSC4. The Helicase ATP-binding 2 domain occupies 1340-1515 (NTVYNSDDNV…WLGCSATSTF (176 aa)). 1353–1360 (APTGSGKT) provides a ligand contact to ATP. A Phosphothreonine modification is found at Thr1431. Positions 1457 to 1460 (DEVH) match the DEAH box motif. The 209-residue stretch at 1548–1756 (PVYHAITKHS…TIENKQDAVD (209 aa)) folds into the Helicase C-terminal 2 domain. Thr1768 carries the phosphothreonine modification. The SEC63 2 domain occupies 1815-2127 (PLNLGMIAAY…GCDQEYKFSV (313 aa)). At Ser2005 the chain carries Phosphoserine. Residue Lys2094 forms a Glycyl lysine isopeptide (Lys-Gly) (interchain with G-Cter in SUMO) linkage. At Thr2134 the chain carries Phosphothreonine. Residues Ser2136 and Ser2138 each carry the phosphoserine modification.

It belongs to the helicase family. SKI2 subfamily. Component of a core complex containing at least PRPF8, SNRNP200, EFTUD2 and SNRNP40. Component of the U5 snRNP and U4/U6-U5 tri-snRNP complexes, building blocks of the spliceosome. Component of the U4/U6-U5 tri-snRNP complex composed of the U4, U6 and U5 snRNAs and at least PRPF3, PRPF4, PRPF6, PRPF8, PRPF31, SNRNP200, TXNL4A, SNRNP40, DDX23, CD2BP2, PPIH, SNU13, EFTUD2, SART1 and USP39. Component of precatalytic, catalytic and postcatalytic spliceosomal complexes. Component of the minor spliceosome, which splices U12-type introns. Interacts with C9orf78; the interaction is direct and mutually exclusive with its interaction with WBP4. Interacts with WBP4; the interaction is mutually exclusive with its interaction with C9orf78. Interacts with PRPF8. Interacts with TSSC4; the interaction is direct, excludes recruitment of C9ORF78 and WBP4 to SNRNP200 and negatively regulates its RNA helicase activity.

The protein localises to the nucleus. It catalyses the reaction ATP + H2O = ADP + phosphate + H(+). Catalyzes the ATP-dependent unwinding of U4/U6 RNA duplices, an essential step in the assembly of a catalytically active spliceosome. Plays a role in pre-mRNA splicing as core component of precatalytic, catalytic and postcatalytic spliceosomal complexes. As a component of the minor spliceosome, involved in the splicing of U12-type introns in pre-mRNAs. Involved in spliceosome assembly, activation and disassembly. Mediates changes in the dynamic network of RNA-RNA interactions in the spliceosome. This is U5 small nuclear ribonucleoprotein 200 kDa helicase (Snrnp200) from Rattus norvegicus (Rat).